Reading from the N-terminus, the 476-residue chain is Aspartyl/glutamyl-tRNA(Asn/Gln) amidotransferase subunit B (476 aa).

Belongs to the GatB/GatE family. GatB subfamily. Heterotrimer of A, B and C subunits.

It catalyses the reaction L-glutamyl-tRNA(Gln) + L-glutamine + ATP + H2O = L-glutaminyl-tRNA(Gln) + L-glutamate + ADP + phosphate + H(+). The enzyme catalyses L-aspartyl-tRNA(Asn) + L-glutamine + ATP + H2O = L-asparaginyl-tRNA(Asn) + L-glutamate + ADP + phosphate + 2 H(+). Its function is as follows. Allows the formation of correctly charged Asn-tRNA(Asn) or Gln-tRNA(Gln) through the transamidation of misacylated Asp-tRNA(Asn) or Glu-tRNA(Gln) in organisms which lack either or both of asparaginyl-tRNA or glutaminyl-tRNA synthetases. The reaction takes place in the presence of glutamine and ATP through an activated phospho-Asp-tRNA(Asn) or phospho-Glu-tRNA(Gln). The polypeptide is Aspartyl/glutamyl-tRNA(Asn/Gln) amidotransferase subunit B (Listeria welshimeri serovar 6b (strain ATCC 35897 / DSM 20650 / CCUG 15529 / CIP 8149 / NCTC 11857 / SLCC 5334 / V8)).